The sequence spans 160 residues: MNKPLRGAALAAALAGLVALEGSETTAYRDIAGVPTICSGTTAGVKMGDKATPEQCYQMTIKDFQRFERIVLDAIKVPLNVNEQTALTFFCYNVGPVCTTSTAFKRFNQGRATEGCQALAMWNKVTINGQKVVSKGLVNRRNAEIKQCLEPSSQYSSLLW.

The helical; Signal-anchor for type II membrane protein transmembrane segment at 1-19 threads the bilayer; it reads MNKPLRGAALAAALAGLVA. Over 20 to 160 the chain is Periplasmic; it reads LEGSETTAYR…PSSQYSSLLW (141 aa). Active-site proton donor/acceptor residues include E21 and D30.

Belongs to the glycosyl hydrolase 24 family.

Its subcellular location is the host cell inner membrane. It catalyses the reaction Hydrolysis of (1-&gt;4)-beta-linkages between N-acetylmuramic acid and N-acetyl-D-glucosamine residues in a peptidoglycan and between N-acetyl-D-glucosamine residues in chitodextrins.. Functionally, signal-arrest-release (SAR) endolysin with lysozyme activity that degrades host peptidoglycans and participates with the pinholin and spanin proteins in the sequential events which lead to programmed host cell lysis releasing the mature viral particles. Once the pinholin has permeabilized the host cell membrane, the SAR-endolysin is released into the periplasm where it breaks down the peptidoglycan layer. The polypeptide is SAR-endolysin (45) (Pseudomonas phage phiKMV).